Consider the following 233-residue polypeptide: TATA-box-binding protein 1 (233 aa).

2 consecutive repeat copies span residues 58 to 134 (LQNI…ARIV) and 148 to 225 (IQNI…YPVL).

The protein belongs to the TBP family. In terms of assembly, belongs to the TFIID complex together with the TBP-associated factors (TAFs). Binds DNA as monomer.

Its subcellular location is the nucleus. In terms of biological role, general transcription factor that functions at the core of the DNA-binding multiprotein factor TFIID. Binding of TFIID to the TATA box is the initial transcriptional step of the pre-initiation complex (PIC), playing a role in the activation of eukaryotic genes transcribed by RNA polymerase II. In Triticum aestivum (Wheat), this protein is TATA-box-binding protein 1 (TBP1).